The chain runs to 239 residues: MPRKHLIANQTNKKQQTSAKQLQKLAKRIASAVKKGGTNIQSNPHLKVAVDLALAKGLSMDSIKRNIHGSEKDTTKISEFCYEIFGPNGVGIIVFGLTDNPNRLLSSLNGYLAKLKGQLAKPNSVKINFQEEGIIFVNKNNYLKDDLIELLILDNINLIDVDYDEECFEISLHSNSYFHAKELLKKNNFSIVDSEIKLVPLLTVDLDRNQQTLLSRFLNACEEDDDIQFVVHNANPWEE.

It belongs to the TACO1 family.

The protein resides in the cytoplasm. The protein is Probable transcriptional regulatory protein MG332 of Mycoplasma genitalium (strain ATCC 33530 / DSM 19775 / NCTC 10195 / G37) (Mycoplasmoides genitalium).